A 577-amino-acid polypeptide reads, in one-letter code: Torulene dioxygenase (577 aa).

The disordered stretch occupies residues 1–20 (MALNGPGVYHRTREHEQEDA). Fe(2+) is bound by residues His239, His291, His361, and His570.

The protein belongs to the carotenoid oxygenase family. It depends on Fe(2+) as a cofactor.

The protein localises to the cytoplasm. It localises to the cytosol. It catalyses the reaction torulene + O2 = 4'-apo-beta-carotenal + 3-methyl-2-butenal. It functions in the pathway carotenoid biosynthesis. Torulene dioxygenase; part of pathway that mediates the biosynthesis of neurosporaxanthin, a carboxylic apocarotenoid acting as an essential protective pigments and leading to orange pigmentation. CarT mediates the cleavage of torulene into beta-apo-4'-carotenal, the aldehyde corresponding to the acidic neurosporaxanthin. Is also active on other monocyclic synthetic substrates such as beta-apo-8'-carotenal and beta-apo-10'-carotenal to produce beta-apo-14'-carotenal and retinal(beta-apo-15'-carotenal), respectively. Neurosporaxanthin is synthesized from geranyl-geranyl pyrophosphate (GGPP) through several enzymatic activities. Phytoene synthase activity performed by the bifunctional enzyme carAR first produces phytoene from geranyl-geranyl pyrophosphate (GGPP). The phytoene dehydrogenase carB then introduces 4 desaturations to lead to lycopene which is substrate of the carotene cyclase activity of carAR that leads to the production of gamma-carotene. CarB then performs a 5th desaturation reaction to yield torulene. Torulene is the substrate of the dioxidase carT that breaks the molecule, removing five carbon atoms to yield beta-apo-4'-carotenal, whereas the aldehyde dehydrogenase carD mediates the last step by converting beta-apo-4'-carotenal into neurosporaxanthin. In Gibberella fujikuroi (strain CBS 195.34 / IMI 58289 / NRRL A-6831) (Bakanae and foot rot disease fungus), this protein is Torulene dioxygenase.